The sequence spans 273 residues: 4-hydroxybenzoate octaprenyltransferase (273 aa).

8 helical membrane-spanning segments follow: residues 7 to 27 (IGIY…SEGF), 30 to 50 (LKLL…GCVI), 83 to 103 (FFVL…WLTI), 122 to 142 (WTYF…LMAF), 146 to 166 (LNEI…WTVI), 197 to 217 (LIIG…SNVF), 221 to 241 (ISYH…QYLI), and 253 to 273 (FLHN…SVGL).

The protein belongs to the UbiA prenyltransferase family. Mg(2+) serves as cofactor.

The protein localises to the cell inner membrane. The enzyme catalyses all-trans-octaprenyl diphosphate + 4-hydroxybenzoate = 4-hydroxy-3-(all-trans-octaprenyl)benzoate + diphosphate. Its pathway is cofactor biosynthesis; ubiquinone biosynthesis. Functionally, catalyzes the prenylation of para-hydroxybenzoate (PHB) with an all-trans polyprenyl group. Mediates the second step in the final reaction sequence of ubiquinone-8 (UQ-8) biosynthesis, which is the condensation of the polyisoprenoid side chain with PHB, generating the first membrane-bound Q intermediate 3-octaprenyl-4-hydroxybenzoate. The sequence is that of 4-hydroxybenzoate octaprenyltransferase from Vesicomyosocius okutanii subsp. Calyptogena okutanii (strain HA).